Consider the following 257-residue polypeptide: Phosphate import ATP-binding protein PstB (257 aa).

The 243-residue stretch at 4–246 folds into the ABC transporter domain; sequence LKLNDVNIYY…KKIFENPDQK (243 aa). 36-43 is an ATP binding site; it reads GPSGCGKS.

It belongs to the ABC transporter superfamily. Phosphate importer (TC 3.A.1.7) family. In terms of assembly, the complex is composed of two ATP-binding proteins (PstB), two transmembrane proteins (PstC and PstA) and a solute-binding protein (PstS).

It localises to the cell membrane. The catalysed reaction is phosphate(out) + ATP + H2O = ADP + 2 phosphate(in) + H(+). Functionally, part of the ABC transporter complex PstSACB involved in phosphate import. Responsible for energy coupling to the transport system. This chain is Phosphate import ATP-binding protein PstB, found in Corynebacterium glutamicum (strain ATCC 13032 / DSM 20300 / JCM 1318 / BCRC 11384 / CCUG 27702 / LMG 3730 / NBRC 12168 / NCIMB 10025 / NRRL B-2784 / 534).